A 239-amino-acid polypeptide reads, in one-letter code: Uridylate kinase (239 aa).

Residue 10–13 (KLSG) coordinates ATP. G53 lines the UMP pocket. ATP-binding residues include G54 and R58. UMP is bound by residues D73 and 135-142 (TGRPYFTT). Residues N163, Y169, and D172 each coordinate ATP.

The protein belongs to the UMP kinase family. As to quaternary structure, homohexamer.

It is found in the cytoplasm. The catalysed reaction is UMP + ATP = UDP + ADP. Its pathway is pyrimidine metabolism; CTP biosynthesis via de novo pathway; UDP from UMP (UMPK route): step 1/1. Inhibited by UTP. Its function is as follows. Catalyzes the reversible phosphorylation of UMP to UDP. The polypeptide is Uridylate kinase (Mycoplasmopsis synoviae (strain 53) (Mycoplasma synoviae)).